We begin with the raw amino-acid sequence, 305 residues long: D-alanine--D-alanine ligase (305 aa).

Positions Lys-107–Gln-299 constitute an ATP-grasp domain. Pro-134–Gln-185 contributes to the ATP binding site. Residues Asp-253, Glu-266, and Asn-268 each contribute to the Mg(2+) site.

The protein belongs to the D-alanine--D-alanine ligase family. It depends on Mg(2+) as a cofactor. The cofactor is Mn(2+).

Its subcellular location is the cytoplasm. The catalysed reaction is 2 D-alanine + ATP = D-alanyl-D-alanine + ADP + phosphate + H(+). It functions in the pathway cell wall biogenesis; peptidoglycan biosynthesis. Cell wall formation. The chain is D-alanine--D-alanine ligase from Citrifermentans bemidjiense (strain ATCC BAA-1014 / DSM 16622 / JCM 12645 / Bem) (Geobacter bemidjiensis).